Consider the following 315-residue polypeptide: Methionyl-tRNA formyltransferase (315 aa).

111–114 (SLLP) serves as a coordination point for (6S)-5,6,7,8-tetrahydrofolate.

It belongs to the Fmt family.

The catalysed reaction is L-methionyl-tRNA(fMet) + (6R)-10-formyltetrahydrofolate = N-formyl-L-methionyl-tRNA(fMet) + (6S)-5,6,7,8-tetrahydrofolate + H(+). Functionally, attaches a formyl group to the free amino group of methionyl-tRNA(fMet). The formyl group appears to play a dual role in the initiator identity of N-formylmethionyl-tRNA by promoting its recognition by IF2 and preventing the misappropriation of this tRNA by the elongation apparatus. This Flavobacterium johnsoniae (strain ATCC 17061 / DSM 2064 / JCM 8514 / BCRC 14874 / CCUG 350202 / NBRC 14942 / NCIMB 11054 / UW101) (Cytophaga johnsonae) protein is Methionyl-tRNA formyltransferase.